We begin with the raw amino-acid sequence, 122 residues long: Large ribosomal subunit protein uL14 (122 aa).

It belongs to the universal ribosomal protein uL14 family. Part of the 50S ribosomal subunit. Forms a cluster with proteins L3 and L19. In the 70S ribosome, L14 and L19 interact and together make contacts with the 16S rRNA in bridges B5 and B8.

Its function is as follows. Binds to 23S rRNA. Forms part of two intersubunit bridges in the 70S ribosome. The sequence is that of Large ribosomal subunit protein uL14 from Methylococcus capsulatus (strain ATCC 33009 / NCIMB 11132 / Bath).